Reading from the N-terminus, the 354-residue chain is Guanine nucleotide-binding protein alpha-2 subunit (354 aa).

A G-alpha domain is found at 33 to 354; sequence KIYKVLLLGA…QHSLKEAGMF (322 aa). Residues 36-49 form a G1 motif region; the sequence is KVLLLGASDSGKST. Residues Asp44, Ser45, Gly46, Lys47, Ser48, Thr49, Asp148, Leu173, Thr179, Gly201, Asn269, Lys270, Asp272, and Ala326 each contribute to the GTP site. Mg(2+) is bound at residue Ser48. A G2 motif region spans residues 171 to 179; sequence DILRSRNST. Thr179 provides a ligand contact to Mg(2+). The G3 motif stretch occupies residues 194-203; the sequence is IRMFDVGGQR. Positions 265–272 are G4 motif; it reads ILFLNKFD. The tract at residues 324 to 329 is G5 motif; it reads TTAVDT.

This sequence belongs to the G-alpha family. In terms of assembly, g proteins are composed of 3 units; alpha, beta and gamma. Binding of the beta-gamma subunit complex (git5-git11) to the alpha subunit (gpa2) facilitates interaction with GPCR git3. Interacts with GPCR git3; the interaction is direct and leads to activation of gpa2 upon glucose stimulation. Interacts with adenylate cyclase cyr1 (via N-terminus); the interaction is direct and serves to activate adenylate cyclase and cAMP-PKA signaling, to repress sexual development and gluconeogenesis. It depends on Mg(2+) as a cofactor.

The protein resides in the cell membrane. Its function is as follows. Alpha subunit of the heterotrimeric guanine nucleotide-binding protein (G protein) involved in glucose-induced cAMP signaling. Binds to its cognate transmembrane receptor git3, which senses extracellular glucose, and activates cAMP-PKA signaling to repress sexual development and gluconeogenesis. This chain is Guanine nucleotide-binding protein alpha-2 subunit, found in Schizosaccharomyces pombe (strain 972 / ATCC 24843) (Fission yeast).